The following is a 334-amino-acid chain: Protein CUP-SHAPED COTYLEDON 3 (334 aa).

The NAC domain maps to 22–171; the sequence is LPPGFRFHPT…EWVICRVFNK (150 aa). The DNA-binding element occupies 121-177; the sequence is VGMKKTLVFYKGRAPRGLKTKWVMHEYRLENDHSHRHTCKEEWVICRVFNKTGDRKN.

As to expression, in a general manner, present at the boundaries between mersitems and araising primordia.

It is found in the nucleus. Functionally, transcription activator. Involved in molecular mechanisms regulating shoot apical meristem (SAM) formation during embryogenesis and organ separation. Required for axillary meristem initiation and separation of the meristem from the main stem. May act as an inhibitor of cell division. The protein is Protein CUP-SHAPED COTYLEDON 3 (NAC031) of Arabidopsis thaliana (Mouse-ear cress).